The primary structure comprises 424 residues: Tyrosine--tRNA ligase (424 aa).

Y37 provides a ligand contact to L-tyrosine. The short motif at 42 to 51 (PTADSLHLGH) is the 'HIGH' region element. K144 is modified (N6-acetyllysine). L-tyrosine contacts are provided by Y175 and Q179. A 'KMSKS' region motif is present at residues 235-239 (KFGKT). Residue K238 coordinates ATP. Residues 357–414 (ADLMQALVDSELQPSRGQARKTIASNAITINGEKQSDPEYFFKEEDRLFGRFTLLRRG) form the S4 RNA-binding domain.

This sequence belongs to the class-I aminoacyl-tRNA synthetase family. TyrS type 1 subfamily. In terms of assembly, homodimer.

The protein resides in the cytoplasm. It carries out the reaction tRNA(Tyr) + L-tyrosine + ATP = L-tyrosyl-tRNA(Tyr) + AMP + diphosphate + H(+). Functionally, catalyzes the attachment of tyrosine to tRNA(Tyr) in a two-step reaction: tyrosine is first activated by ATP to form Tyr-AMP and then transferred to the acceptor end of tRNA(Tyr). This is Tyrosine--tRNA ligase from Shigella flexneri serotype 5b (strain 8401).